A 337-amino-acid polypeptide reads, in one-letter code: Cysteine synthase 3 (337 aa).

K47 carries the post-translational modification N6-(pyridoxal phosphate)lysine. Pyridoxal 5'-phosphate-binding positions include N78, 182 to 186, and S270; that span reads GSSGT.

Belongs to the cysteine synthase/cystathionine beta-synthase family. As to quaternary structure, homodimer. It depends on pyridoxal 5'-phosphate as a cofactor.

The enzyme catalyses O-acetyl-L-serine + hydrogen sulfide = L-cysteine + acetate. The protein operates within amino-acid biosynthesis; L-cysteine biosynthesis; L-cysteine from L-serine: step 2/2. Its function is as follows. Primarily catalyzes the formation of cysteine and acetate from O-acetylserine and hydrogen sulfide. Can also catalyze the formation of cysteine and acetate from S-sulfocysteine and hydrogen sulfide and the formation of cyanoalanine and hydrogen sulfide from either S-sulfocysteine or O-acetylserine and hydrogen cyanide. The sequence is that of Cysteine synthase 3 from Caenorhabditis elegans.